The chain runs to 188 residues: V-type proton ATPase subunit E (188 aa).

Belongs to the V-ATPase E subunit family.

Its function is as follows. Produces ATP from ADP in the presence of a proton gradient across the membrane. This is V-type proton ATPase subunit E from Dictyoglomus thermophilum (strain ATCC 35947 / DSM 3960 / H-6-12).